The following is a 234-amino-acid chain: tRNA1(Val) (adenine(37)-N6)-methyltransferase (234 aa).

Belongs to the methyltransferase superfamily. tRNA (adenine-N(6)-)-methyltransferase family.

It localises to the cytoplasm. The catalysed reaction is adenosine(37) in tRNA1(Val) + S-adenosyl-L-methionine = N(6)-methyladenosine(37) in tRNA1(Val) + S-adenosyl-L-homocysteine + H(+). Its function is as follows. Specifically methylates the adenine in position 37 of tRNA(1)(Val) (anticodon cmo5UAC). This is tRNA1(Val) (adenine(37)-N6)-methyltransferase from Pedobacter heparinus (strain ATCC 13125 / DSM 2366 / CIP 104194 / JCM 7457 / NBRC 12017 / NCIMB 9290 / NRRL B-14731 / HIM 762-3).